Reading from the N-terminus, the 104-residue chain is Pyrimidine/purine nucleoside phosphorylase (104 aa).

Belongs to the nucleoside phosphorylase PpnP family.

The enzyme catalyses a purine D-ribonucleoside + phosphate = a purine nucleobase + alpha-D-ribose 1-phosphate. The catalysed reaction is adenosine + phosphate = alpha-D-ribose 1-phosphate + adenine. It catalyses the reaction cytidine + phosphate = cytosine + alpha-D-ribose 1-phosphate. It carries out the reaction guanosine + phosphate = alpha-D-ribose 1-phosphate + guanine. The enzyme catalyses inosine + phosphate = alpha-D-ribose 1-phosphate + hypoxanthine. The catalysed reaction is thymidine + phosphate = 2-deoxy-alpha-D-ribose 1-phosphate + thymine. It catalyses the reaction uridine + phosphate = alpha-D-ribose 1-phosphate + uracil. It carries out the reaction xanthosine + phosphate = alpha-D-ribose 1-phosphate + xanthine. Its function is as follows. Catalyzes the phosphorolysis of diverse nucleosides, yielding D-ribose 1-phosphate and the respective free bases. Can use uridine, adenosine, guanosine, cytidine, thymidine, inosine and xanthosine as substrates. Also catalyzes the reverse reactions. This is Pyrimidine/purine nucleoside phosphorylase from Geotalea uraniireducens (strain Rf4) (Geobacter uraniireducens).